A 351-amino-acid chain; its full sequence is Phosphoribosylformylglycinamidine cyclo-ligase (351 aa).

It belongs to the AIR synthase family.

Its subcellular location is the cytoplasm. The catalysed reaction is 2-formamido-N(1)-(5-O-phospho-beta-D-ribosyl)acetamidine + ATP = 5-amino-1-(5-phospho-beta-D-ribosyl)imidazole + ADP + phosphate + H(+). Its pathway is purine metabolism; IMP biosynthesis via de novo pathway; 5-amino-1-(5-phospho-D-ribosyl)imidazole from N(2)-formyl-N(1)-(5-phospho-D-ribosyl)glycinamide: step 2/2. The sequence is that of Phosphoribosylformylglycinamidine cyclo-ligase from Burkholderia ambifaria (strain ATCC BAA-244 / DSM 16087 / CCUG 44356 / LMG 19182 / AMMD) (Burkholderia cepacia (strain AMMD)).